The sequence spans 223 residues: Ribose-5-phosphate isomerase A (223 aa).

Substrate is bound by residues 29–32 (TGST), 82–85 (DGAD), and 95–98 (KGGG). Residue glutamate 104 is the Proton acceptor of the active site. Lysine 122 contacts substrate.

The protein belongs to the ribose 5-phosphate isomerase family. Homodimer.

It carries out the reaction aldehydo-D-ribose 5-phosphate = D-ribulose 5-phosphate. It functions in the pathway carbohydrate degradation; pentose phosphate pathway; D-ribose 5-phosphate from D-ribulose 5-phosphate (non-oxidative stage): step 1/1. Functionally, catalyzes the reversible conversion of ribose-5-phosphate to ribulose 5-phosphate. This chain is Ribose-5-phosphate isomerase A, found in Neisseria meningitidis serogroup B (strain ATCC BAA-335 / MC58).